Consider the following 80-residue polypeptide: MNKSINNLQDIFLNNARKERIPVTIFLVNGVQLKGIVKGFDSFTVVLDSDGKQQLVYKHAISTVSPAKPILFNSAQVFDN.

In terms of domain architecture, Sm spans 10–70 (DIFLNNARKE…ISTVSPAKPI (61 aa)).

Belongs to the Hfq family. Homohexamer.

Its function is as follows. RNA chaperone that binds small regulatory RNA (sRNAs) and mRNAs to facilitate mRNA translational regulation in response to envelope stress, environmental stress and changes in metabolite concentrations. Also binds with high specificity to tRNAs. The protein is RNA-binding protein Hfq of Clostridium perfringens (strain SM101 / Type A).